The primary structure comprises 191 residues: Prophage tail fiber assembly protein homolog TfaR (191 aa).

This sequence belongs to the tfa family.

The sequence is that of Prophage tail fiber assembly protein homolog TfaR (tfaR) from Escherichia coli (strain K12).